The sequence spans 274 residues: Thiamine kinase (274 aa).

This sequence belongs to the thiamine kinase family.

It catalyses the reaction thiamine + ATP = thiamine phosphate + ADP + H(+). It functions in the pathway cofactor biosynthesis; thiamine diphosphate biosynthesis; thiamine phosphate from thiamine: step 1/1. Its function is as follows. Catalyzes the ATP-dependent phosphorylation of thiamine to thiamine phosphate. Is involved in thiamine salvage. In Escherichia coli O157:H7 (strain EC4115 / EHEC), this protein is Thiamine kinase.